We begin with the raw amino-acid sequence, 182 residues long: Large ribosomal subunit protein uL5 (182 aa).

The protein belongs to the universal ribosomal protein uL5 family. In terms of assembly, part of the 50S ribosomal subunit; part of the 5S rRNA/L5/L18/L25 subcomplex. Contacts the 5S rRNA and the P site tRNA. Forms a bridge to the 30S subunit in the 70S ribosome.

Functionally, this is one of the proteins that bind and probably mediate the attachment of the 5S RNA into the large ribosomal subunit, where it forms part of the central protuberance. In the 70S ribosome it contacts protein S13 of the 30S subunit (bridge B1b), connecting the 2 subunits; this bridge is implicated in subunit movement. Contacts the P site tRNA; the 5S rRNA and some of its associated proteins might help stabilize positioning of ribosome-bound tRNAs. The protein is Large ribosomal subunit protein uL5 of Borrelia duttonii (strain Ly).